Here is a 261-residue protein sequence, read N- to C-terminus: [LysW]-aminoadipate/[LysW]-glutamate kinase (261 aa).

Substrate is bound by residues 35–36 (GG), Arg62, and Asn166.

The protein belongs to the acetylglutamate kinase family. LysZ subfamily.

It is found in the cytoplasm. It catalyses the reaction [amino-group carrier protein]-C-terminal-N-(1,4-dicarboxybutan-1-yl)-L-glutamine + ATP = [amino-group carrier protein]-C-terminal-N-(1-carboxy-5-phosphooxy-5-oxopentan-1-yl)-L-glutamine + ADP. The enzyme catalyses [amino-group carrier protein]-C-terminal-gamma-(L-glutamyl)-L-glutamate + ATP = [amino-group carrier protein]-C-terminal-gamma-(5-phospho-L-glutamyl)-L-glutamate + ADP. The protein operates within amino-acid biosynthesis; L-lysine biosynthesis via AAA pathway; L-lysine from L-alpha-aminoadipate (Thermus route): step 2/5. It participates in amino-acid biosynthesis; L-arginine biosynthesis. In terms of biological role, involved in both the arginine and lysine biosynthetic pathways. Phosphorylates the LysW-bound precursors glutamate (for arginine biosynthesis), respectively alpha-aminoadipate (for lysine biosynthesis). This chain is [LysW]-aminoadipate/[LysW]-glutamate kinase, found in Sulfurisphaera tokodaii (strain DSM 16993 / JCM 10545 / NBRC 100140 / 7) (Sulfolobus tokodaii).